The primary structure comprises 472 residues: Aspartyl/glutamyl-tRNA(Asn/Gln) amidotransferase subunit B (472 aa).

The protein belongs to the GatB/GatE family. GatB subfamily. As to quaternary structure, heterotrimer of A, B and C subunits.

It catalyses the reaction L-glutamyl-tRNA(Gln) + L-glutamine + ATP + H2O = L-glutaminyl-tRNA(Gln) + L-glutamate + ADP + phosphate + H(+). It carries out the reaction L-aspartyl-tRNA(Asn) + L-glutamine + ATP + H2O = L-asparaginyl-tRNA(Asn) + L-glutamate + ADP + phosphate + 2 H(+). Its function is as follows. Allows the formation of correctly charged Asn-tRNA(Asn) or Gln-tRNA(Gln) through the transamidation of misacylated Asp-tRNA(Asn) or Glu-tRNA(Gln) in organisms which lack either or both of asparaginyl-tRNA or glutaminyl-tRNA synthetases. The reaction takes place in the presence of glutamine and ATP through an activated phospho-Asp-tRNA(Asn) or phospho-Glu-tRNA(Gln). In Campylobacter jejuni subsp. jejuni serotype O:2 (strain ATCC 700819 / NCTC 11168), this protein is Aspartyl/glutamyl-tRNA(Asn/Gln) amidotransferase subunit B.